Reading from the N-terminus, the 334-residue chain is Syntaxin-18 (334 aa).

Residues 1–308 (MAVDITLLFR…EDIREAIKNN (308 aa)) lie on the Cytoplasmic side of the membrane. Disordered stretches follow at residues 29–50 (GGAD…GDFS) and 166–225 (LSKL…GEDE). Composition is skewed to basic and acidic residues over residues 33 to 50 (GSRD…GDFS), 166 to 186 (LSKL…EKSS), and 193 to 207 (SEEK…EKPL). The t-SNARE coiled-coil homology domain occupies 242-304 (IGEMNSLFDE…KEGNEDIREA (63 aa)). Residues 309–329 (AGFRVWILFFLVMCSFSLLFL) traverse the membrane as a helical; Anchor for type IV membrane protein segment. The Vesicular segment spans residues 330 to 334 (DWYDS).

This sequence belongs to the syntaxin family. As to quaternary structure, component of a SNARE complex consisting of STX18, USE1L, BNIP1/SEC20L, and SEC22B. RINT1/TIP20L and ZW10 are associated with the complex through interaction with BNIP1/SEC20L. Interacts directly with USE1L and BNIP1/SEC20L.

The protein resides in the endoplasmic reticulum membrane. It localises to the golgi apparatus membrane. In terms of biological role, syntaxin that may be involved in targeting and fusion of Golgi-derived retrograde transport vesicles with the ER. In Rattus norvegicus (Rat), this protein is Syntaxin-18 (Stx18).